The sequence spans 615 residues: MFS-type transporter 1 (615 aa).

The disordered stretch occupies residues 1–85; sequence MTALAAVPDL…GNNVSPHGRH (85 aa). A compositionally biased stretch (polar residues) spans 16 to 53; the sequence is PSTTTVHSPNYSGSPADISSSPTTRAVSRNTARQTASA. Asn-25 carries N-linked (GlcNAc...) asparagine glycosylation. A run of 6 helical transmembrane segments spans residues 94 to 114, 138 to 158, 162 to 182, 192 to 212, 222 to 242, and 251 to 271; these read CLVI…SGIL, VYSL…HIIG, VWIT…RSAT, VLGV…TNGF, FAFQ…LGGI, and FGFY…LVVL. An N-linked (GlcNAc...) asparagine glycan is attached at Asn-302. Helical transmembrane passes span 320-340, 351-371, 397-417, 432-452, 455-475, 488-508, 522-542, and 585-605; these read WTGT…FSVV, QNIA…LWVG, AAVF…ALYF, FLPM…LVET, VRWL…IMAL, FAML…NLII, AVFN…TAVV, and AAFW…FLGL.

It belongs to the major facilitator superfamily. EmrB family.

It is found in the membrane. Its function is as follows. MFS-type transporter; part of the gene cluster that mediates the biosynthesis of pyriculol and pyriculariol, two heptaketides that induce lesion formation upon application on rice leaves but are dispensable for pathogenicity. With the ABC transporter ABC7, is most likely responsible for pyriculol and pyriculariol secretion and thereby may contribute to intrinsic resistance. This Pyricularia oryzae (strain 70-15 / ATCC MYA-4617 / FGSC 8958) (Rice blast fungus) protein is MFS-type transporter 1.